The sequence spans 797 residues: Protocadherin beta-11 (797 aa).

An N-terminal signal peptide occupies residues 1-26 (MENQGTRTQQIRQVLLLFVLLGMSQA). Topologically, residues 27-690 (GSETWSFSVA…AQADSLTVYL (664 aa)) are extracellular. 5 Cadherin domains span residues 35 to 133 (VAEE…SPIF), 138 to 242 (MLLE…SPEF), 247 to 347 (YEVK…APEI), 352 to 451 (ITSP…APTF), and 456 to 561 (YTLF…SPFV). Asparagine 418, asparagine 436, asparagine 487, and asparagine 567 each carry an N-linked (GlcNAc...) asparagine glycan. The Cadherin 6 domain occupies 568–671 (GSAPCTELVP…LVDGFSQPYL (104 aa)). The helical transmembrane segment at 691 to 711 (VVALASVSSLFLFSVLLFVAV) threads the bilayer. Residues 712–797 (RLCRRSRAAS…TFRNSFGFNF (86 aa)) lie on the Cytoplasmic side of the membrane.

It localises to the cell membrane. In terms of biological role, potential calcium-dependent cell-adhesion protein. May be involved in the establishment and maintenance of specific neuronal connections in the brain. The chain is Protocadherin beta-11 (PCDHB11) from Homo sapiens (Human).